A 462-amino-acid chain; its full sequence is Steroidogenic factor 1 (462 aa).

A DNA-binding region (nuclear receptor) is located at residues 10–85 (DELCPVCGDK…VGMRLEAVRA (76 aa)). The NR C4-type zinc-finger motif lies at 13 to 33 (CPVCGDKVSGYHYGLLTCESC). Lysine 34, lysine 38, and lysine 72 each carry N6-acetyllysine. An NR C4-type zinc finger spans residues 49-73 (CTESQSCKIDKTQRKRCPFCRFQKC). Residues 117 to 149 (GFKLETGPPMGVPPPPPPPPDYMLPPSLHAPEP) are disordered. A Glycyl lysine isopeptide (Lys-Gly) (interchain with G-Cter in SUMO) cross-link involves residue lysine 119. The segment covering 126 to 139 (MGVPPPPPPPPDYM) has biased composition (pro residues). A Glycyl lysine isopeptide (Lys-Gly) (interchain with G-Cter in SUMO) cross-link involves residue lysine 194. Position 203 is a phosphoserine; by CDK7 (serine 203). The NR LBD domain maps to 223 to 460 (NVPELILQLL…NLLIEMLQAK (238 aa)). Residues glycine 342, tyrosine 437, and lysine 441 each coordinate a 1,2-diacyl-sn-glycero-3-phosphocholine.

It belongs to the nuclear hormone receptor family. NR5 subfamily. As to quaternary structure, binds DNA as a monomer. Part of a complex consisting of SFPQ, NONO and NR5A1. Interacts with NR0B2, NCOA2 and PPARGC1A. Interacts with DGKQ and CDK7. Binds to and activated by HIPK3. Post-translationally, acetylation stimulates the transcriptional activity. Sumoylation reduces CDK7-mediated phosphorylation on Ser-203. In terms of processing, phosphorylated on Ser-203 by CDK7. This phosphorylation promotes transcriptional activity.

The protein localises to the nucleus. Transcriptional activator. Seems to be essential for sexual differentiation and formation of the primary steroidogenic tissues. Binds to the Ad4 site found in the promoter region of steroidogenic P450 genes such as CYP11A, CYP11B and CYP21B. Also regulates the AMH/Muellerian inhibiting substance gene as well as the AHCH and STAR genes. 5'-YCAAGGYC-3' and 5'-RRAGGTCA-3' are the consensus sequences for the recognition by NR5A1. The SFPQ-NONO-NR5A1 complex binds to the CYP17 promoter and regulates basal and cAMP-dependent transcriptional activity. Binds phosphatidylcholine and phospholipids with a phosphatidylinositol (PI) headgroup, in particular PI(3,4)P2 and PI(3,4,5)P3. Activated by the phosphorylation of NR5A1 by HIPK3 leading to increased steroidogenic gene expression upon cAMP signaling pathway stimulation. This Rattus norvegicus (Rat) protein is Steroidogenic factor 1 (Nr5a1).